A 187-amino-acid polypeptide reads, in one-letter code: Elongation factor P (187 aa).

This sequence belongs to the elongation factor P family.

It is found in the cytoplasm. Its pathway is protein biosynthesis; polypeptide chain elongation. Its function is as follows. Involved in peptide bond synthesis. Stimulates efficient translation and peptide-bond synthesis on native or reconstituted 70S ribosomes in vitro. Probably functions indirectly by altering the affinity of the ribosome for aminoacyl-tRNA, thus increasing their reactivity as acceptors for peptidyl transferase. The polypeptide is Elongation factor P (Helicobacter hepaticus (strain ATCC 51449 / 3B1)).